The following is a 201-amino-acid chain: Transmembrane 4 L6 family member 18 (201 aa).

Over 1 to 9 (MGSRKCGGC) the chain is Cytoplasmic. The chain crosses the membrane as a helical span at residues 10–30 (LSCLLIPLALWSIIVNILLYF). Topologically, residues 31 to 49 (PNGQTSYASSNKLTNYVWY) are extracellular. A helical transmembrane segment spans residues 50–70 (FEGICFSGIMMLIVTTVLLVL). Over 71–93 (ENNNNYKCCQSENCSKKYVTLLS) the chain is Cytoplasmic. Residues 94-114 (IIFSSLGIAFSGYCLVISALG) traverse the membrane as a helical segment. The Extracellular segment spans residues 115-157 (LVQGPYCRTLDGWEYAFEGTAGRFLTDSSIWIQCLEPAHVVEW). Residues 158–178 (NIILFSILITLSGLQVIICLI) form a helical membrane-spanning segment. Residues 179–201 (RVVMQLSKILCGSYSVIFQPGII) are Cytoplasmic-facing.

This sequence belongs to the L6 tetraspanin family.

It is found in the membrane. This chain is Transmembrane 4 L6 family member 18 (TM4SF18), found in Homo sapiens (Human).